A 715-amino-acid chain; its full sequence is MIYEGKAITVKALESGIVELKFDLKGESVNKFNRLTLNELRQAVDAIKADASVKGVIVSSGKDVFIVGADITEFVDNFKLPEAELVAGNLEANRIFSAFEDLEVPTVAAINGIALGGGLEMCLAADYRVMSTSAKIGLPEVKLGIYPGFGGTVRLPRLIGSDNAVEWIASGKENRAEDALKVGAVDAVVAPELLQAGALDLIKRAISGELDYKAKRQPKLEKLKLNAIEQMMAFETAKGFVAGQAGPNYPAPVEAIKTIQKAANFGRDKALEVEAAGFAKLAKTSVAESLIGLFLNDQELKRKAKAHDEIAHDVKQAAVLGAGIMGGGIAYQSAVKGTPILMKDIREEAIQLGLNEASKLLGNRVDKGRLTPAKMAEALNAIRPTLSYGDFANVDIVVEAVVENPKVKQAVLAEVEGQVKEDAILASNTSTISINLLAKALKRPENFVGMHFFNPVHMMPLVEVIRGEKSSEVAVATTVAYAKKMGKNPIVVNDCPGFLVNRVLFPYFGGFAKLVSAGVDFVRIDKVMEKFGWPMGPAYLMDVVGIDTGHHGRDVMAEGFPDRMKDERRSAVDALYEANRLGQKNGKGFYAYETDKRGKPKKVFDAAVLDVLKPIVFEQREVTDEDIINWMMVPLCLETVRCLEDGIVETAAEADMGLVYGIGFPPFRGGALRYIDSIGVAEFVALADQYADLGPLYHPTAKLREMAKNGQRFFN.

The interval 1-190 is enoyl-CoA hydratase/isomerase; it reads MIYEGKAITV…KVGAVDAVVA (190 aa). Position 297 (Asp-297) interacts with substrate. The segment at 312–715 is 3-hydroxyacyl-CoA dehydrogenase; sequence HDVKQAAVLG…MAKNGQRFFN (404 aa). Residues Met-325, Asp-344, 401–403, Lys-408, and Ser-430 contribute to the NAD(+) site; that span reads VVE. Catalysis depends on His-451, which acts as the For 3-hydroxyacyl-CoA dehydrogenase activity. Asn-454 provides a ligand contact to NAD(+). Positions 501 and 660 each coordinate substrate.

In the N-terminal section; belongs to the enoyl-CoA hydratase/isomerase family. This sequence in the C-terminal section; belongs to the 3-hydroxyacyl-CoA dehydrogenase family. In terms of assembly, heterotetramer of two alpha chains (FadB) and two beta chains (FadA).

It carries out the reaction a (3S)-3-hydroxyacyl-CoA + NAD(+) = a 3-oxoacyl-CoA + NADH + H(+). It catalyses the reaction a (3S)-3-hydroxyacyl-CoA = a (2E)-enoyl-CoA + H2O. The catalysed reaction is a 4-saturated-(3S)-3-hydroxyacyl-CoA = a (3E)-enoyl-CoA + H2O. The enzyme catalyses (3S)-3-hydroxybutanoyl-CoA = (3R)-3-hydroxybutanoyl-CoA. It carries out the reaction a (3Z)-enoyl-CoA = a 4-saturated (2E)-enoyl-CoA. It catalyses the reaction a (3E)-enoyl-CoA = a 4-saturated (2E)-enoyl-CoA. The protein operates within lipid metabolism; fatty acid beta-oxidation. Involved in the aerobic and anaerobic degradation of long-chain fatty acids via beta-oxidation cycle. Catalyzes the formation of 3-oxoacyl-CoA from enoyl-CoA via L-3-hydroxyacyl-CoA. It can also use D-3-hydroxyacyl-CoA and cis-3-enoyl-CoA as substrate. The chain is Fatty acid oxidation complex subunit alpha from Pseudomonas putida (Arthrobacter siderocapsulatus).